Reading from the N-terminus, the 148-residue chain is Deoxyuridine 5'-triphosphate nucleotidohydrolase (148 aa).

Substrate is bound by residues 67-69, Asn80, 84-86, and Lys94; these read RSG and TID.

It belongs to the dUTPase family. Mg(2+) serves as cofactor.

It catalyses the reaction dUTP + H2O = dUMP + diphosphate + H(+). It functions in the pathway pyrimidine metabolism; dUMP biosynthesis; dUMP from dCTP (dUTP route): step 2/2. In terms of biological role, this enzyme is involved in nucleotide metabolism: it produces dUMP, the immediate precursor of thymidine nucleotides and it decreases the intracellular concentration of dUTP so that uracil cannot be incorporated into DNA. The chain is Deoxyuridine 5'-triphosphate nucleotidohydrolase from Orientia tsutsugamushi (strain Boryong) (Rickettsia tsutsugamushi).